Consider the following 221-residue polypeptide: Flagellar L-ring protein 1 (221 aa).

An N-terminal signal peptide occupies residues 1 to 16; sequence MKRFLILTPMVLALCG. A lipid anchor (N-palmitoyl cysteine) is attached at Cys-17. Cys-17 is lipidated: S-diacylglycerol cysteine.

It belongs to the FlgH family. The basal body constitutes a major portion of the flagellar organelle and consists of four rings (L,P,S, and M) mounted on a central rod.

The protein localises to the cell outer membrane. Its subcellular location is the bacterial flagellum basal body. Functionally, assembles around the rod to form the L-ring and probably protects the motor/basal body from shearing forces during rotation. The polypeptide is Flagellar L-ring protein 1 (Yersinia pestis).